Reading from the N-terminus, the 233-residue chain is Transmembrane protein 40 (233 aa).

M1 carries the N-acetylmethionine modification. Positions 1-14 are enriched in polar residues; it reads METSASSSQPQDNS. Residues 1-143 form a disordered region; it reads METSASSSQP…RRGSDPASGE (143 aa). The span at 50 to 70 shows a compositional bias: low complexity; the sequence is SSSSSSSSSSSSSSSSSSSSS. Residues 93–104 show a composition bias toward gly residues; sequence YPHGNGSPGPGH. The span at 105-114 shows a compositional bias: basic and acidic residues; the sequence is GEPDVLKDEL. S137 is modified (phosphoserine). 2 helical membrane-spanning segments follow: residues 160–180 and 187–207; these read FFHF…YHYY and LGVG…FGLV.

Its subcellular location is the membrane. The sequence is that of Transmembrane protein 40 (TMEM40) from Homo sapiens (Human).